Reading from the N-terminus, the 631-residue chain is MSATKLTRREQRAQAQHFIDTLEGSAFPNSKRIYITGTHPGVRVPMREIQLSPTLIGGSKEQPQYEENEAIPVYDTSGPYGDPQIAINVQQGLAKLRQPWIDARGDTEELTVRSSDYTKARLADDGLDELRFSGVLTPKRAKAGHRVTQLHYARKGIITPEMEFIAIRENMGRERIRSEVLRHQHPGMSFGARLPENITAEFVRDEVAAGRAIIPANINHPESEPMIIGRNFLVKVNANIGNSAVTSSIEEEVEKLVWSTRWGADTVMDLSTGRYIHETREWILRNSPVPIGTVPIYQALEKVNGIAEDLTWEVFRDTLLEQAEQGVDYFTIHAGVLLRYVPMTAKRLTGIVSRGGSIMAKWCLSHHQENFLYQHFREICEICAAYDVSLSLGDGLRPGSIQDANDEAQFAELHTLGELTKIAWEYDVQVMIEGPGHVPMQMIRRNMTEELEHCHEAPFYTLGPLTTDIAPGYDHFTSGIGAAMIGWFGCAMLCYVTPKEHLGLPNKEDVKQGLITYKIAAHAADLAKGHPGAQIRDNAMSKARFEFRWEDQFNLALDPFTARAYHDETLSQESGKVAHFCSMCGPKFCSMKISQEVRDYAAAQTIEVGMADMSENFRARGGEIYLRKEEA.

Residues Asn239, Met268, Tyr297, His333, 353 to 355 (SRG), 394 to 397 (DGLR), and Glu433 each bind substrate. Position 437 (His437) interacts with Zn(2+). Residue Tyr460 participates in substrate binding. His501 is a binding site for Zn(2+). [4Fe-4S] cluster contacts are provided by Cys581, Cys584, and Cys589.

Belongs to the ThiC family. In terms of assembly, homodimer. [4Fe-4S] cluster serves as cofactor.

It carries out the reaction 5-amino-1-(5-phospho-beta-D-ribosyl)imidazole + S-adenosyl-L-methionine = 4-amino-2-methyl-5-(phosphooxymethyl)pyrimidine + CO + 5'-deoxyadenosine + formate + L-methionine + 3 H(+). The protein operates within cofactor biosynthesis; thiamine diphosphate biosynthesis. Its function is as follows. Catalyzes the synthesis of the hydroxymethylpyrimidine phosphate (HMP-P) moiety of thiamine from aminoimidazole ribotide (AIR) in a radical S-adenosyl-L-methionine (SAM)-dependent reaction. The chain is Phosphomethylpyrimidine synthase from Escherichia coli O81 (strain ED1a).